The following is a 499-amino-acid chain: Glutamyl-tRNA(Gln) amidotransferase subunit A (499 aa).

Active-site charge relay system residues include K79 and S154. S178 acts as the Acyl-ester intermediate in catalysis.

The protein belongs to the amidase family. GatA subfamily. Heterotrimer of A, B and C subunits.

It carries out the reaction L-glutamyl-tRNA(Gln) + L-glutamine + ATP + H2O = L-glutaminyl-tRNA(Gln) + L-glutamate + ADP + phosphate + H(+). Functionally, allows the formation of correctly charged Gln-tRNA(Gln) through the transamidation of misacylated Glu-tRNA(Gln) in organisms which lack glutaminyl-tRNA synthetase. The reaction takes place in the presence of glutamine and ATP through an activated gamma-phospho-Glu-tRNA(Gln). This is Glutamyl-tRNA(Gln) amidotransferase subunit A from Psychrobacter sp. (strain PRwf-1).